We begin with the raw amino-acid sequence, 200 residues long: ASI1-immunoprecipitated protein 1 (200 aa).

Residues 18-101 (RTVYVDELTP…RPVRACAAEP (84 aa)) enclose the RRM domain.

As to quaternary structure, component of the ASI1-AIPP1-EDM2 (AAE) RNA regulatory complex composed of at least AIPP1/EDM3, ASI1 and EDM2 and may contain CPL2, AIPP2 and AIPP3/BDT1. Binds directly to ASI1 and EDM2 and may function as a bridge protein between them. Co-associates with EDM2 to histone H3 lysine 9 dimethylation (H3K9me2)-marked chromatin and transcripts at a critical proximal polyadenylation site of RPP7 to hamper proximal transcript polyadeylation/termination.

Its subcellular location is the nucleus. Prevents gene silencing by suppressing CHG methylation as well as histone H3 lysine 9 dimethylation (H3K9me2) status at target loci. Collaboratively with ASI1 and EDM2, the AAE complex regulates alternative RNA processing (e.g. alternative splicing) and epigenetic silencing (e.g. H3K9me2) of intronic heterochromatin-containing genes as well as genic heterochromatin-containing genes by promoting distal 3' polyadenylation, thus being required for the accumulation of their full-length transcripts. May also modulate transposable elements (TE) expression. Mediates RPP7-dependent race-specific disease resistance by promoting histone H3 lysine 9 dimethylation (H3K9me2) at the proximal RPP7 polyadenylation site, thus controlling alternative polyadenylation of RPP7 immune receptor transcripts and facilitating 2-phosphoserine RNAPII occupancy. In cv. Columbia, required for RPP7-dependent disease resistance against the Hyaloperonospora arabidopsidis isolate Hiks1. This chain is ASI1-immunoprecipitated protein 1, found in Arabidopsis thaliana (Mouse-ear cress).